A 426-amino-acid chain; its full sequence is Transcription factor bHLH60 (426 aa).

Composition is skewed to polar residues over residues 117–137 (QNGN…SSAN) and 148–172 (TDSS…QNNR). The disordered stretch occupies residues 117–201 (QNGNISGETP…SSEENEKLPY (85 aa)). The segment covering 191 to 200 (KSSEENEKLP) has biased composition (basic and acidic residues). Residues 210–307 (QATDSHSLAE…DEIINHVQSL (98 aa)) enclose the bHLH domain. Residues 367–398 (HRQLQQPPTQQWPFDGLNQPVWGREEDQAHGN) form a disordered region.

Homodimer. Expressed constitutively in roots, leaves, stems, and flowers.

Its subcellular location is the nucleus. This chain is Transcription factor bHLH60 (BHLH60), found in Arabidopsis thaliana (Mouse-ear cress).